We begin with the raw amino-acid sequence, 132 residues long: Small ribosomal subunit protein uS8 (132 aa).

Belongs to the universal ribosomal protein uS8 family. Part of the 30S ribosomal subunit. Contacts proteins S5 and S12.

Functionally, one of the primary rRNA binding proteins, it binds directly to 16S rRNA central domain where it helps coordinate assembly of the platform of the 30S subunit. The chain is Small ribosomal subunit protein uS8 from Exiguobacterium sp. (strain ATCC BAA-1283 / AT1b).